A 231-amino-acid polypeptide reads, in one-letter code: Large ribosomal subunit protein uL1 (231 aa).

The protein belongs to the universal ribosomal protein uL1 family. Part of the 50S ribosomal subunit.

Its function is as follows. Binds directly to 23S rRNA. The L1 stalk is quite mobile in the ribosome, and is involved in E site tRNA release. In terms of biological role, protein L1 is also a translational repressor protein, it controls the translation of the L11 operon by binding to its mRNA. The sequence is that of Large ribosomal subunit protein uL1 from Carboxydothermus hydrogenoformans (strain ATCC BAA-161 / DSM 6008 / Z-2901).